Consider the following 470-residue polypeptide: MALSSVSSCEPMEDEMSIMGSDTEDNFTGGDTCAEATRGLVNKSAFVPTQTVGTVSALRNVVGDPPKSVVVSFSASPQRAQPSNPKSERPAFGHGRRNRRRPFRRNNWKQQQRGWEKPEPENVPARQSAGSWPKRSSLPVHMRLGQRGGDSSSADSGHGGAGPSDRWRFKTRTQSVARVHRNRRRGNANHGSNTPGRSAGDRLNAAAASSIADVCRRVTSSRIGEMFHGARETLTTPVKNGGFRAENSSPWAPVLGFGSDQFNPEARRITWDTLVEHGVNLYKLFEVRSHAAEAARSLRDAVMRGENLLEALASADETLSWCKMIVTKNLPMRTRDPIISSSVALLDNLRLKLEPFMRCYLSSSGSPTLAELCDHQRLSDVACVPTFMFVMLARIARAVGSGAETVSRDALGPDGRVLADYVPGACLAGTLEAIDAHKRRCKADTCSLVSAYTLVPVYLHGKYFYCNQIF.

Disordered regions lie at residues M1–D31 and V62–N204. Residues V71–P85 show a composition bias toward polar residues. Basic residues-rich tracts occupy residues H94–N107 and R178–N187. Positions 359, 437, 441, and 446 each coordinate Zn(2+). The CHC2-type zinc finger occupies C359 to C446.

Belongs to the HHV-1 ICP27 protein family. Homodimer. Homodimerization is required for transactivation. Associates in a complex with RNA, and host export factors NXF1/TAP and ALYREF; these interactions allow nuclear export of viral transcripts. Interacts with three host shuttling SR proteins SRSF1, SRSF3 and SRSF7. Interacts with host SRPK1. Interacts with IE62; this interaction enhances IE62 transactivation.

The protein localises to the host cytoplasm. Its subcellular location is the host nucleus. Multifunctional regulator of the expression of viral genes that mediates nuclear export of viral intronless mRNAs. This immediate early (EI) protein promotes the nuclear export of viral intronless mRNAs by interacting with mRNAs and host NXF1/TAP. This is mRNA export factor ICP27 homolog from Equine herpesvirus 1 (strain Ab4p) (EHV-1).